A 523-amino-acid chain; its full sequence is WD repeat-containing protein YPL247C (523 aa).

Residues 1–64 (MDPFHNGNKR…TTNGGNSKRN (64 aa)) form a disordered region. The span at 9–40 (KRSSISFGSSQRQPYNKNNYLSGTNGPSSAAQ) shows a compositional bias: polar residues. Ser47 bears the Phosphoserine mark. Residues 52 to 64 (SGNTTNGGNSKRN) show a composition bias toward low complexity. At Ser65 the chain carries Phosphoserine. 4 WD repeats span residues 173-213 (DVVY…RQFQ), 241-281 (GTFP…YVKT), 285-325 (AHDS…HSTI), and 392-432 (GHGS…MEIN). A disordered region spans residues 436–472 (SKSPSIHGTSLEDPDGDTEMTDGGAGSGLNEDPLSLN).

This sequence belongs to the WD repeat WDR68 family.

The protein resides in the cytoplasm. Its subcellular location is the nucleus. This Saccharomyces cerevisiae (strain ATCC 204508 / S288c) (Baker's yeast) protein is WD repeat-containing protein YPL247C.